Reading from the N-terminus, the 968-residue chain is Bifunctional glyoxylate cycle protein (968 aa).

Positions 1–443 (MSSAAKNFYQ…AVASQDEEIL (443 aa)) are isocitrate lyase. Positions 444–968 (SLTAQNVAGD…AYDRLVSEGY (525 aa)) are malate synthase. The active-site Proton acceptor is Arg601. Asp881 functions as the Proton donor in the catalytic mechanism.

In the N-terminal section; belongs to the isocitrate lyase/PEP mutase superfamily. Isocitrate lyase family. This sequence in the C-terminal section; belongs to the malate synthase family. In terms of tissue distribution, intestinal and body wall muscle cells.

It catalyses the reaction D-threo-isocitrate = glyoxylate + succinate. It carries out the reaction glyoxylate + acetyl-CoA + H2O = (S)-malate + CoA + H(+). Its pathway is carbohydrate metabolism; glyoxylate cycle; (S)-malate from isocitrate: step 1/2. The protein operates within carbohydrate metabolism; glyoxylate cycle; (S)-malate from isocitrate: step 2/2. The protein is Bifunctional glyoxylate cycle protein (icl-1) of Caenorhabditis elegans.